The primary structure comprises 188 residues: uncharacterized protein (188 aa).

Residues 1-23 form the signal peptide; the sequence is MVRPKLAFYILPLLLAFLGSALG. Asparagine 74 is a glycosylation site (N-linked (GlcNAc...) asparagine).

This is an uncharacterized protein from Mus musculus (Mouse).